Reading from the N-terminus, the 234-residue chain is 1-(5-phosphoribosyl)-5-[(5-phosphoribosylamino)methylideneamino] imidazole-4-carboxamide isomerase (234 aa).

The Proton acceptor role is filled by Asp9. Catalysis depends on Asp131, which acts as the Proton donor.

The protein belongs to the HisA/HisF family.

The protein resides in the cytoplasm. The catalysed reaction is 1-(5-phospho-beta-D-ribosyl)-5-[(5-phospho-beta-D-ribosylamino)methylideneamino]imidazole-4-carboxamide = 5-[(5-phospho-1-deoxy-D-ribulos-1-ylimino)methylamino]-1-(5-phospho-beta-D-ribosyl)imidazole-4-carboxamide. It functions in the pathway amino-acid biosynthesis; L-histidine biosynthesis; L-histidine from 5-phospho-alpha-D-ribose 1-diphosphate: step 4/9. This chain is 1-(5-phosphoribosyl)-5-[(5-phosphoribosylamino)methylideneamino] imidazole-4-carboxamide isomerase, found in Staphylococcus epidermidis (strain ATCC 35984 / DSM 28319 / BCRC 17069 / CCUG 31568 / BM 3577 / RP62A).